A 244-amino-acid chain; its full sequence is Agamous-like MADS-box protein AGL13 (244 aa).

The MADS-box domain maps to Arg3 to Phe57. Residues Thr85–Lys175 enclose the K-box domain.

The protein localises to the nucleus. Its function is as follows. Probable transcription factor. In Arabidopsis thaliana (Mouse-ear cress), this protein is Agamous-like MADS-box protein AGL13 (AGL13).